Here is a 477-residue protein sequence, read N- to C-terminus: Glycogen synthase (477 aa).

K15 contributes to the ADP-alpha-D-glucose binding site.

The protein belongs to the glycosyltransferase 1 family. Bacterial/plant glycogen synthase subfamily.

It catalyses the reaction [(1-&gt;4)-alpha-D-glucosyl](n) + ADP-alpha-D-glucose = [(1-&gt;4)-alpha-D-glucosyl](n+1) + ADP + H(+). It functions in the pathway glycan biosynthesis; glycogen biosynthesis. Functionally, synthesizes alpha-1,4-glucan chains using ADP-glucose. This chain is Glycogen synthase, found in Shigella flexneri serotype 5b (strain 8401).